The sequence spans 163 residues: Small ribosomal subunit protein uS5 (163 aa).

An S5 DRBM domain is found at 11–74; sequence LTDRVVHINR…EQAKKNLIRV (64 aa).

The protein belongs to the universal ribosomal protein uS5 family. As to quaternary structure, part of the 30S ribosomal subunit. Contacts proteins S4 and S8.

Functionally, with S4 and S12 plays an important role in translational accuracy. Located at the back of the 30S subunit body where it stabilizes the conformation of the head with respect to the body. The chain is Small ribosomal subunit protein uS5 from Syntrophotalea carbinolica (strain DSM 2380 / NBRC 103641 / GraBd1) (Pelobacter carbinolicus).